We begin with the raw amino-acid sequence, 472 residues long: Glutamyl-tRNA(Gln) amidotransferase subunit A (472 aa).

Catalysis depends on charge relay system residues lysine 69 and serine 144. Serine 168 serves as the catalytic Acyl-ester intermediate.

This sequence belongs to the amidase family. GatA subfamily. Heterotrimer of A, B and C subunits.

It carries out the reaction L-glutamyl-tRNA(Gln) + L-glutamine + ATP + H2O = L-glutaminyl-tRNA(Gln) + L-glutamate + ADP + phosphate + H(+). In terms of biological role, allows the formation of correctly charged Gln-tRNA(Gln) through the transamidation of misacylated Glu-tRNA(Gln) in organisms which lack glutaminyl-tRNA synthetase. The reaction takes place in the presence of glutamine and ATP through an activated gamma-phospho-Glu-tRNA(Gln). This is Glutamyl-tRNA(Gln) amidotransferase subunit A from Sulfurisphaera tokodaii (strain DSM 16993 / JCM 10545 / NBRC 100140 / 7) (Sulfolobus tokodaii).